Consider the following 187-residue polypeptide: Pre-mRNA-splicing factor cwf7 (187 aa).

The protein belongs to the SPF27 family. As to quaternary structure, belongs to the 40S cdc5-associated complex (or cwf complex), a spliceosome sub-complex reminiscent of a late-stage spliceosome composed of the U2, U5 and U6 snRNAs and at least brr2, cdc5, cwf2/prp3, cwf3/syf1, cwf4/syf3, cwf5/ecm2, spp42/cwf6, cwf7/spf27, cwf8, cwf9, cwf10, cwf11, cwf12, prp45/cwf13, cwf14, cwf15, cwf16, cwf17, cwf18, cwf19, cwf20, cwf21, cwf22, cwf23, cwf24, cwf25, cwf26, cyp7/cwf27, cwf28, cwf29/ist3, lea1, msl1, prp5/cwf1, prp10, prp12/sap130, prp17, prp22, sap61, sap62, sap114, sap145, slu7, smb1, smd1, smd3, smf1, smg1 and syf2.

The protein resides in the nucleus. Functionally, involved in mRNA splicing. This Schizosaccharomyces pombe (strain 972 / ATCC 24843) (Fission yeast) protein is Pre-mRNA-splicing factor cwf7 (cwf7).